Consider the following 218-residue polypeptide: MFTGIIESIGNIGAIIRHNEDLSIVVNTNNLDISDVNIGDSIATNGVCLTVSKLLPSGYTADLSLETYKRTAFHSYRIGQEVNLEKAMLPTTRLGGHLVSGHVDGVGEVIEFKRNGRAINIWVAVPVQLKKYLSEKGSVTIDGISLTINAVYQNVIKLTIVPHTLAETNLVNINIDKKVNVEIDMMARYLEKLIKVDRYESEKTSNVSMDLERYGFIS.

2 Lumazine-binding repeats span residues 1-97 and 98-194; these read MFTG…LGGH and LVSG…EKLI. 2,4-dihydroxypteridine-binding positions include 4–6, 48–50, 62–67, 101–103, Lys136, 145–147, and 159–164; these read GII, CLT, DLSLET, GHV, SLT, and TIVPHT.

As to quaternary structure, homotrimer.

The enzyme catalyses 2 6,7-dimethyl-8-(1-D-ribityl)lumazine + H(+) = 5-amino-6-(D-ribitylamino)uracil + riboflavin. It participates in cofactor biosynthesis; riboflavin biosynthesis; riboflavin from 2-hydroxy-3-oxobutyl phosphate and 5-amino-6-(D-ribitylamino)uracil: step 2/2. In terms of biological role, catalyzes the dismutation of two molecules of 6,7-dimethyl-8-ribityllumazine, resulting in the formation of riboflavin and 5-amino-6-(D-ribitylamino)uracil. In Photobacterium leiognathi, this protein is Riboflavin synthase (ribE).